The sequence spans 450 residues: Tubulin beta-3 chain (450 aa).

Positions 1-4 (MREI) match the MREI motif motif. GDP contacts are provided by Gly10, Gln11, Cys12, and Gln15. Gln11 serves as a coordination point for GTP. Position 69 (Glu69) interacts with GTP. Glu69 lines the Mg(2+) pocket. GDP contacts are provided by Asn99, Ser138, Gly142, Thr143, and Gly144. The GTP site is built by Ser138, Gly142, Thr143, and Gly144. Residue Ser172 is modified to Phosphoserine; by CDK1. GDP-binding residues include Asp177, Asn204, Tyr222, and Asn226. Asn204 is a GTP binding site. Asn226 lines the GTP pocket. The disordered stretch occupies residues 425-450 (YQDATAEEEGEMYEDDEEESEAQGPK). A compositionally biased stretch (acidic residues) spans 429–450 (TAEEEGEMYEDDEEESEAQGPK). Residue Glu438 is modified to 5-glutamyl polyglutamate. Residue Ser444 is modified to Phosphoserine.

It belongs to the tubulin family. In terms of assembly, heterodimer of alpha- and beta-tubulin. A typical microtubule is a hollow water-filled tube with an outer diameter of 25 nm and an inner diameter of 15 nM. Alpha-beta heterodimers associate head-to-tail to form protofilaments running lengthwise along the microtubule wall with the beta-tubulin subunit facing the microtubule plus end conferring a structural polarity. Microtubules usually have 13 protofilaments but different protofilament numbers can be found in some organisms and specialized cells. Interacts with gamma-tubulin; the interaction allows microtubules to nucleate from the gamma-tubulin ring complex (gTuRC). Interacts with UNC5C (via cytoplasmic domain); this interaction is decreased by NTN1/Netrin-1. Interacts with NLRP5/MATER at cytoskeleton microtubules. Interacts with DPYSL5. Interacts with CFAP61. It depends on Mg(2+) as a cofactor. In terms of processing, some glutamate residues at the C-terminus are polyglutamylated, resulting in polyglutamate chains on the gamma-carboxyl group. Polyglutamylation plays a key role in microtubule severing by spastin (SPAST). SPAST preferentially recognizes and acts on microtubules decorated with short polyglutamate tails: severing activity by SPAST increases as the number of glutamates per tubulin rises from one to eight, but decreases beyond this glutamylation threshold. Glutamylation is also involved in cilia motility. Some glutamate residues at the C-terminus are monoglycylated but not polyglycylated due to the absence of functional TTLL10 in human. Monoglycylation is mainly limited to tubulin incorporated into cilia and flagella axonemes, which is required for their stability and maintenance. Flagella glycylation controls sperm motility. Both polyglutamylation and monoglycylation can coexist on the same protein on adjacent residues, and lowering glycylation levels increases polyglutamylation, and reciprocally. Post-translationally, phosphorylated on Ser-172 by CDK1 during the cell cycle, from metaphase to telophase, but not in interphase. This phosphorylation inhibits tubulin incorporation into microtubules. As to expression, expression is primarily restricted to central and peripheral nervous system. Greatly increased expression in most cancerous tissues.

Its subcellular location is the cytoplasm. The protein resides in the cytoskeleton. It localises to the cell projection. It is found in the growth cone. The protein localises to the lamellipodium. Its subcellular location is the filopodium. Tubulin is the major constituent of microtubules, protein filaments consisting of alpha- and beta-tubulin heterodimers. Microtubules grow by the addition of GTP-tubulin dimers to the microtubule end, where a stabilizing cap forms. Below the cap, alpha-beta tubulin heterodimers are in GDP-bound state, owing to GTPase activity of alpha-tubulin. TUBB3 plays a critical role in proper axon guidance and maintenance. Binding of NTN1/Netrin-1 to its receptor UNC5C might cause dissociation of UNC5C from polymerized TUBB3 in microtubules and thereby lead to increased microtubule dynamics and axon repulsion. Plays a role in dorsal root ganglion axon projection towards the spinal cord. This Homo sapiens (Human) protein is Tubulin beta-3 chain (TUBB3).